Reading from the N-terminus, the 249-residue chain is Metallo-beta-lactamase type 2 (249 aa).

A signal peptide spans 1-22 (MLKKIKISLILALGLTSLQAFG). Residues H98, H100, D102, H161, and C180 each coordinate Zn(2+). K183 is a substrate binding site. H222 contributes to the Zn(2+) binding site.

Belongs to the metallo-beta-lactamase superfamily. Class-B beta-lactamase family. As to quaternary structure, monomer. Requires Zn(2+) as cofactor.

The protein resides in the periplasm. The enzyme catalyses a beta-lactam + H2O = a substituted beta-amino acid. Inhibited by chelating agents such as EDTA, 1-10 phenanthroline and pyridine-2,6-dicarboxylic acid. In terms of biological role, confers resistance to the different beta-lactams antibiotics (penicillin, cephalosporin and carbapenem) via the hydrolysis of the beta-lactam ring. In Elizabethkingia meningoseptica (Chryseobacterium meningosepticum), this protein is Metallo-beta-lactamase type 2 (blaB1).